The primary structure comprises 520 residues: Cilia- and flagella-associated protein 157 (520 aa).

The tract at residues 1 to 22 (MAPKKSVSKAGKELEVKKKGGK) is disordered. Positions 10 to 22 (AGKELEVKKKGGK) are enriched in basic and acidic residues. Coiled coils occupy residues 33–189 (LAKE…LEKK) and 236–372 (LQMA…QATS). The segment at 416–453 (PQKAACPHQESQSHGPPKESRPSIQLPRTGSLLPQLSD) is disordered. A compositionally biased stretch (polar residues) spans 437-453 (PSIQLPRTGSLLPQLSD).

Belongs to the CFAP157 family. As to quaternary structure, interacts with TUBB and TUBA4A. Interacts with CEP350.

It localises to the cytoplasm. The protein localises to the cytoskeleton. The protein resides in the cilium basal body. Functionally, specifically required during spermatogenesis for flagellum morphogenesis and sperm motility. May be required to suppress the formation of supernumerary axonemes and ensure a correct ultrastructure. The protein is Cilia- and flagella-associated protein 157 of Homo sapiens (Human).